A 123-amino-acid polypeptide reads, in one-letter code: Small ribosomal subunit protein uS13c (123 aa).

The tract at residues 89–123 (RGKRHRNNLPVRGQRTRTNARSRRGSKKTVTGKKK) is disordered. The segment covering 102 to 123 (QRTRTNARSRRGSKKTVTGKKK) has biased composition (basic residues).

It belongs to the universal ribosomal protein uS13 family. Part of the 30S ribosomal subunit.

It localises to the plastid. It is found in the chloroplast. Functionally, located at the top of the head of the 30S subunit, it contacts several helices of the 16S rRNA. The chain is Small ribosomal subunit protein uS13c from Phaeodactylum tricornutum (strain CCAP 1055/1).